Here is a 302-residue protein sequence, read N- to C-terminus: Sulfate adenylyltransferase subunit 2 (302 aa).

The protein belongs to the PAPS reductase family. CysD subfamily. As to quaternary structure, heterodimer composed of CysD, the smaller subunit, and CysN.

It carries out the reaction sulfate + ATP + H(+) = adenosine 5'-phosphosulfate + diphosphate. Its pathway is sulfur metabolism; hydrogen sulfide biosynthesis; sulfite from sulfate: step 1/3. Its function is as follows. With CysN forms the ATP sulfurylase (ATPS) that catalyzes the adenylation of sulfate producing adenosine 5'-phosphosulfate (APS) and diphosphate, the first enzymatic step in sulfur assimilation pathway. APS synthesis involves the formation of a high-energy phosphoric-sulfuric acid anhydride bond driven by GTP hydrolysis by CysN coupled to ATP hydrolysis by CysD. This is Sulfate adenylyltransferase subunit 2 from Photorhabdus laumondii subsp. laumondii (strain DSM 15139 / CIP 105565 / TT01) (Photorhabdus luminescens subsp. laumondii).